Reading from the N-terminus, the 471-residue chain is Trigger factor (471 aa).

In terms of domain architecture, PPIase FKBP-type spans 165 to 244; it reads GDFVSIDLRA…VQSVKERVLP (80 aa). Positions 407-471 are disordered; sequence VTDASGNPVD…EATAEDPAKS (65 aa). A compositionally biased stretch (acidic residues) spans 416–443; the sequence is DLEELVGGTEEDDVTEDATEDVTEDAAP.

The protein belongs to the FKBP-type PPIase family. Tig subfamily.

Its subcellular location is the cytoplasm. It catalyses the reaction [protein]-peptidylproline (omega=180) = [protein]-peptidylproline (omega=0). In terms of biological role, involved in protein export. Acts as a chaperone by maintaining the newly synthesized protein in an open conformation. Functions as a peptidyl-prolyl cis-trans isomerase. This chain is Trigger factor, found in Kineococcus radiotolerans (strain ATCC BAA-149 / DSM 14245 / SRS30216).